The chain runs to 283 residues: Acetylglutamate kinase (283 aa).

Substrate is bound by residues 64–65, R86, and N181; that span reads GG.

The protein belongs to the acetylglutamate kinase family. ArgB subfamily.

It is found in the cytoplasm. It carries out the reaction N-acetyl-L-glutamate + ATP = N-acetyl-L-glutamyl 5-phosphate + ADP. The protein operates within amino-acid biosynthesis; L-arginine biosynthesis; N(2)-acetyl-L-ornithine from L-glutamate: step 2/4. Its function is as follows. Catalyzes the ATP-dependent phosphorylation of N-acetyl-L-glutamate. This Sulfurimonas denitrificans (strain ATCC 33889 / DSM 1251) (Thiomicrospira denitrificans (strain ATCC 33889 / DSM 1251)) protein is Acetylglutamate kinase.